We begin with the raw amino-acid sequence, 199 residues long: Octanoyltransferase (199 aa).

The BPL/LPL catalytic domain occupies Ser-27–Lys-199. Substrate contacts are provided by residues Arg-66–His-73, Ser-133–Gly-135, and Gly-146–Ala-148. Catalysis depends on Cys-164, which acts as the Acyl-thioester intermediate.

This sequence belongs to the LipB family.

It is found in the cytoplasm. The catalysed reaction is octanoyl-[ACP] + L-lysyl-[protein] = N(6)-octanoyl-L-lysyl-[protein] + holo-[ACP] + H(+). It functions in the pathway protein modification; protein lipoylation via endogenous pathway; protein N(6)-(lipoyl)lysine from octanoyl-[acyl-carrier-protein]: step 1/2. Catalyzes the transfer of endogenously produced octanoic acid from octanoyl-acyl-carrier-protein onto the lipoyl domains of lipoate-dependent enzymes. Lipoyl-ACP can also act as a substrate although octanoyl-ACP is likely to be the physiological substrate. In Legionella pneumophila (strain Paris), this protein is Octanoyltransferase.